Consider the following 692-residue polypeptide: Glycine--tRNA ligase beta subunit (692 aa).

The protein belongs to the class-II aminoacyl-tRNA synthetase family. As to quaternary structure, tetramer of two alpha and two beta subunits.

Its subcellular location is the cytoplasm. The catalysed reaction is tRNA(Gly) + glycine + ATP = glycyl-tRNA(Gly) + AMP + diphosphate. The sequence is that of Glycine--tRNA ligase beta subunit from Oceanobacillus iheyensis (strain DSM 14371 / CIP 107618 / JCM 11309 / KCTC 3954 / HTE831).